The sequence spans 186 residues: Casparian strip membrane protein 1 (186 aa).

At 1 to 26 (MKGGSIELGEVSKNASTNKGVKRGLS) the chain is on the cytoplasmic side. Residues 27-47 (IMDFILRIIAGVATLASAVAM) traverse the membrane as a helical segment. The Extracellular segment spans residues 48–72 (GTTDERLPFATSFVQFRAEYDDLPS). The helical transmembrane segment at 73 to 93 (FVFFVLANSIVCGYLALSLIL) threads the bilayer. At 94–107 (SILHIVRSTAVKSR) the chain is on the cytoplasmic side. Residues 108-128 (ILLIVLDMVMMGLLAAAASAA) traverse the membrane as a helical segment. The Extracellular segment spans residues 129–157 (ASIVYIAHYGNTQANWFPICQQYNSFCER). A helical transmembrane segment spans residues 158–178 (ISGSLIGSYIAVALFIIIILL). Topologically, residues 179–186 (SQSAISRN) are cytoplasmic.

This sequence belongs to the Casparian strip membrane proteins (CASP) family. In terms of assembly, homodimer and heterodimers.

It is found in the cell membrane. Regulates membrane-cell wall junctions and localized cell wall deposition. Required for establishment of the Casparian strip membrane domain (CSD) and the subsequent formation of Casparian strips, a cell wall modification of the root endodermis that determines an apoplastic barrier between the intraorganismal apoplasm and the extraorganismal apoplasm and prevents lateral diffusion. In Medicago truncatula (Barrel medic), this protein is Casparian strip membrane protein 1.